The sequence spans 303 residues: MSFTVAVKEEILGQHHLSWHELSAIIKMSGSIGLSTSGLTLSVVTENAKLARHLYESFLHFYEIKSEIRHHQRSNLRKNRVYTVFTDEKVQDLLSDLHLADSFFGLETGIDEAILSDEEAGRAYLCGAFLANGSIRDPESGKYQLEISSVYLDHAQGIASLLQQFLLDAKVLERKKGAVTYLQRAEDIMDFLIVIGAMQARDDFERVKILRETRNDLNRANNAETANIARTVSASMKTINNISKIKDIMGLENLPVDLQEVAQLRIQHPDYSIQQLADSLSTPLTKSGVNHRLRKINKIADEL.

The segment at residues 272 to 303 is a DNA-binding region (H-T-H motif); the sequence is SIQQLADSLSTPLTKSGVNHRLRKINKIADEL.

It belongs to the WhiA family.

Involved in cell division and chromosome segregation. The sequence is that of Probable cell division protein WhiA from Streptococcus pneumoniae serotype 2 (strain D39 / NCTC 7466).